The chain runs to 529 residues: tRNA pseudouridine synthase Pus10 (529 aa).

Cys21 and Cys24 together coordinate Zn(2+). Residues Lys42–Gly89 adopt a coiled-coil conformation. Phosphoserine is present on residues Ser79 and Ser84. Zn(2+) is bound by residues Cys109 and Cys112. Positions Thr304–Ser317 are RNA binding forefinger loop. Asp344 serves as the catalytic Nucleophile. Residues Gln442–Arg457 form an RNA binding thumb loop region.

It belongs to the pseudouridine synthase Pus10 family. Interacts with components of the microprocessor complex DROSHA and DGCR8. Proteolytically cleaved during TRAIL-induced cell death. Cleaved, in vitro, either by caspase-3 (CASP3) or caspase-8 (CASP8).

The protein resides in the nucleus. It is found in the cytoplasm. The protein localises to the mitochondrion. It carries out the reaction uridine(55) in tRNA = pseudouridine(55) in tRNA. The catalysed reaction is uridine(54) in tRNA = pseudouridine(54) in tRNA. In terms of biological role, protein with different functions depending on its subcellular location: involved in miRNA processing in the nucleus and acts as a tRNA pseudouridylate synthase in the cytoplasm. In the cytoplasm, acts as a pseudouridylate synthase by catalyzing synthesis of pseudouridine(54) and pseudouridine(55) from uracil-54 and uracil-55, respectively, in the psi GC loop of a subset of tRNAs. tRNA pseudouridylate synthase activity is enhanced by the presence of 1-methyladenosine at position 53-61 of tRNAs. Does not show tRNA pseudouridylate synthase activity in the nucleus. In the nucleus, promotes primary microRNAs (pri-miRNAs) processing independently of its RNA pseudouridylate synthase activity. Binds pri-miRNAs. Modulator of TRAIL/TNFSF10-induced cell death via activation of procaspase-8 and BID cleavage. Required for the progression of the apoptotic signal through intrinsic mitochondrial cell death. In Homo sapiens (Human), this protein is tRNA pseudouridine synthase Pus10.